The following is a 176-amino-acid chain: Nucleoside triphosphate/diphosphate phosphatase (176 aa).

R23 serves as the catalytic Proton donor. 6 residues coordinate Mg(2+): N87, D103, D105, D107, D120, and E123.

Belongs to the Ntdp family. Mg(2+) serves as cofactor.

It catalyses the reaction a ribonucleoside 5'-triphosphate + H2O = a ribonucleoside 5'-diphosphate + phosphate + H(+). The enzyme catalyses a ribonucleoside 5'-diphosphate + H2O = a ribonucleoside 5'-phosphate + phosphate + H(+). Has nucleoside phosphatase activity towards nucleoside triphosphates and nucleoside diphosphates. The polypeptide is Nucleoside triphosphate/diphosphate phosphatase (Bacillus cereus (strain B4264)).